Here is a 466-residue protein sequence, read N- to C-terminus: Cysteine--tRNA ligase (466 aa).

Cys-33 contributes to the Zn(2+) binding site. A 'HIGH' region motif is present at residues 35–45 (PTVYDFAHIGN). Zn(2+) is bound by residues Cys-221, His-246, and Glu-250. Positions 279–283 (KMSKS) match the 'KMSKS' region motif. Lys-282 contacts ATP.

The protein belongs to the class-I aminoacyl-tRNA synthetase family. In terms of assembly, monomer. It depends on Zn(2+) as a cofactor.

It localises to the cytoplasm. The catalysed reaction is tRNA(Cys) + L-cysteine + ATP = L-cysteinyl-tRNA(Cys) + AMP + diphosphate. The sequence is that of Cysteine--tRNA ligase from Sinorhizobium medicae (strain WSM419) (Ensifer medicae).